The primary structure comprises 452 residues: Membrane-bound acylglycerophosphatidylinositol O-acyltransferase mboa-7 (452 aa).

4 helical membrane-spanning segments follow: residues 4 to 24 (IIGL…FSFA), 53 to 73 (PRIA…AFAP), 79 to 99 (FYVF…HYFL), and 104 to 124 (VASH…GITF). N-linked (GlcNAc...) asparagine glycosylation occurs at Asn137. Transmembrane regions (helical) follow at residues 153–173 (FAYF…YQML), 220–240 (AIWE…FVVF), and 244–264 (VYSA…GIYP). Residue Asn319 is glycosylated (N-linked (GlcNAc...) asparagine). His350 is a catalytic residue. Residues 354–374 (AGYFMSFGVVAMCAILEDVIF) form a helical membrane-spanning segment. N-linked (GlcNAc...) asparagine glycosylation is present at Asn414. Residues 421–441 (FWSSIYYWLPLLCVPFYIYSV) traverse the membrane as a helical segment.

Belongs to the membrane-bound acyltransferase family.

The protein localises to the membrane. The enzyme catalyses a 1-acyl-sn-glycero-3-phospho-(1D-myo-inositol) + an acyl-CoA = a 1,2-diacyl-sn-glycero-3-phospho-(1D-myo-inositol) + CoA. The catalysed reaction is a fatty acyl-[ACP] + a 1-acyl-sn-glycero-3-phosphate = a 1,2-diacyl-sn-glycero-3-phosphate + holo-[ACP]. The protein operates within lipid metabolism; phospholipid metabolism. Acyltransferase which mediates the conversion of lysophosphatidylinositol (1-acylglycerophosphatidylinositol or LPI) into phosphatidylinositol (1,2-diacyl-sn-glycero-3-phosphoinositol or PI) (LPIAT activity). Prefers arachidonoyl-CoA or eicosapentaenoic acid (EPA) as the acyl donor. Prefers sn-2-LPI rather than sn-1-LPI as the acyl acceptor. Lysophospholipid acyltransferases (LPLATs) catalyze the reacylation step of the phospholipid remodeling pathway also known as the Lands cycle. This Caenorhabditis briggsae protein is Membrane-bound acylglycerophosphatidylinositol O-acyltransferase mboa-7.